We begin with the raw amino-acid sequence, 564 residues long: Oxalyl-CoA decarboxylase (564 aa).

Residues I32 and Y118 each coordinate substrate. Residues R158 and K220 each coordinate ADP. A261–S265 is a substrate binding site. 3 residues coordinate ADP: R280, D302, and I322. N355 contributes to the substrate binding site. Thiamine diphosphate-binding positions include Y372 and A396–T398. R403–N404 contacts substrate. G421–M423 contacts thiamine diphosphate. Residue D447 participates in Mg(2+) binding. A thiamine diphosphate-binding site is contributed by S448–A449. Residues N474 and G476 each contribute to the Mg(2+) site. Thiamine diphosphate is bound at residue Y478. Position 550–552 (S550–H552) interacts with substrate.

It belongs to the TPP enzyme family. In terms of assembly, homotetramer; dimer of dimers. Mg(2+) is required as a cofactor. Thiamine diphosphate serves as cofactor.

The enzyme catalyses oxalyl-CoA + H(+) = formyl-CoA + CO2. The protein operates within metabolic intermediate degradation; oxalate degradation; CO(2) and formate from oxalate: step 2/2. Functionally, involved in the catabolism of oxalate and in the adapatation to low pH via the induction of the oxalate-dependent acid tolerance response (ATR). Catalyzes the decarboxylation of oxalyl-CoA to yield carbon dioxide and formyl-CoA. This Escherichia coli O157:H7 protein is Oxalyl-CoA decarboxylase (oxc).